Consider the following 388-residue polypeptide: MKIHEFQTKELFRTYGIPTPEGRMVNTAEAAGEAAGELGGFPVVVKAQIHAGGRGKGGGVKLAKSADEAKSLAGAMLGSRLVTPQTGPEGTLVQKVLVEQGVSIAKELYLSVVADRETAGIVIMASEAGGMDIEAVAETTPEKILKVFVNPLAGLSAFHCRQAAYGLNLPAEAIKPFTQVVSGLFKLFVDYDASLVEINPLILTTDKAVMALDAKINFDDSALFRHKDILALRDTDEEDPLEVEASRFNLNYINMDGNVGNMVNGAGLAMATMDIIKLAGAEPANFLDVGGGANAEMVENGFRIILSDPKVKCILVNIFGGILRCDVLASGIVQAARNTAIHVPLVVRMEGTNVDEGKRILAESGLDLHSAASLKDAAARVAQVVAAA.

Positions 9-244 constitute an ATP-grasp domain; that stretch reads KELFRTYGIP…TDEEDPLEVE (236 aa). Residues K46, 53-55, E99, V102, and E107 contribute to the ATP site; that span reads GRG. The Mg(2+) site is built by N199 and D213. Substrate-binding positions include N264 and 321–323; that span reads GIL.

This sequence belongs to the succinate/malate CoA ligase beta subunit family. In terms of assembly, heterotetramer of two alpha and two beta subunits. Mg(2+) is required as a cofactor.

The enzyme catalyses succinate + ATP + CoA = succinyl-CoA + ADP + phosphate. The catalysed reaction is GTP + succinate + CoA = succinyl-CoA + GDP + phosphate. It participates in carbohydrate metabolism; tricarboxylic acid cycle; succinate from succinyl-CoA (ligase route): step 1/1. Functionally, succinyl-CoA synthetase functions in the citric acid cycle (TCA), coupling the hydrolysis of succinyl-CoA to the synthesis of either ATP or GTP and thus represents the only step of substrate-level phosphorylation in the TCA. The beta subunit provides nucleotide specificity of the enzyme and binds the substrate succinate, while the binding sites for coenzyme A and phosphate are found in the alpha subunit. This chain is Succinate--CoA ligase [ADP-forming] subunit beta, found in Desulfosudis oleivorans (strain DSM 6200 / JCM 39069 / Hxd3) (Desulfococcus oleovorans).